The sequence spans 315 residues: Ankyrin repeat domain-containing protein 54 (315 aa).

The tract at residues 1–49 (MDGSSPLLAAAGSDGDRSSSEGEYTLAGGPSAGDTEKREGESPMEAAGA) is disordered. ANK repeat units follow at residues 124–153 (HAVKRLREAANSNDIDTVRRLLEDDTDPCA), 157–186 (KGRTALHFSSCNGNETIVQLLLSYGADPNQ), 190–219 (LGNTPLHLAACTNHVPVITTLLRGGARVDA), and 223–255 (AGRTPLHLARSKLNILQEGDSRSLETLRGEVTQ).

Its subcellular location is the nucleus. It is found in the cytoplasm. It localises to the midbody. Plays an important role in regulating intracellular signaling events associated with erythroid terminal differentiation. This chain is Ankyrin repeat domain-containing protein 54 (ankrd54), found in Danio rerio (Zebrafish).